A 135-amino-acid polypeptide reads, in one-letter code: MLSPKRTRFRKQHRGRLKGISYRGNRICFGRYALQTLEPAWITSRQIEAGRRAMTRNVRRGGKIWVRIFPDKPVTVRPAETRMGSGKGSPEYWVAVVKPGKILYEMGGVPENIARKAISIAASKMPIKTQFIISE.

It belongs to the universal ribosomal protein uL16 family. As to quaternary structure, part of the 50S ribosomal subunit.

It is found in the plastid. The protein localises to the chloroplast. This is Large ribosomal subunit protein uL16c from Aethionema cordifolium (Lebanon stonecress).